We begin with the raw amino-acid sequence, 276 residues long: Large ribosomal subunit protein uL2 (276 aa).

Residues 224 to 276 form a disordered region; that stretch reads AMNPIDHPHGGGEGKTSGGRNPVTPWGVPTKGKKTRKRNKSSNKYIKRVSDKG. The segment covering 254–270 has biased composition (basic residues); the sequence is KGKKTRKRNKSSNKYIK.

It belongs to the universal ribosomal protein uL2 family. In terms of assembly, part of the 50S ribosomal subunit. Forms a bridge to the 30S subunit in the 70S ribosome.

Functionally, one of the primary rRNA binding proteins. Required for association of the 30S and 50S subunits to form the 70S ribosome, for tRNA binding and peptide bond formation. It has been suggested to have peptidyltransferase activity; this is somewhat controversial. Makes several contacts with the 16S rRNA in the 70S ribosome. The chain is Large ribosomal subunit protein uL2 from Ehrlichia chaffeensis (strain ATCC CRL-10679 / Arkansas).